The sequence spans 213 residues: Ras-related protein Rab-39B (213 aa).

Residues S17, G20, K21, S22, C23, S37, and T40 each contribute to the GTP site. S22 is a binding site for Mg(2+). The switch-I stretch occupies residues 35–43; the sequence is QVSDPTVGV. The Mg(2+) site is built by T40 and D64. GTP-binding residues include G67, H123, K124, D126, A154, and R155. The segment at 67-83 is switch-II; it reads GQERFRSITRAYYRNSV. Residue S201 is modified to Phosphoserine. S-geranylgeranyl cysteine attachment occurs at residues C211 and C213. Position 213 is a cysteine methyl ester (C213).

Belongs to the small GTPase superfamily. Rab family. As to quaternary structure, interacts (GDP-bound) with C9orf72; C9orf72 in complex with SMCR8 acts as a GEF for RAB39B. Interacts (in GTP-bound form) with PICK1 (via PDZ domain); a PICK1 homodimer may allow simultaneous association of RAB39B and GRIA2 to PICK1 which is involved in GRIA2 trafficking. Interacts with isoform c of RASSF1; the interaction is strong. Interacts with isoform a of RASSF1; the interaction is weak. Interacts with the DLG4/PSD-95. Interacts (GTP-bound) with HOPS complex components VPS39 and VPS41. Requires Mg(2+) as cofactor.

It localises to the cell membrane. Its subcellular location is the cytoplasmic vesicle membrane. It is found in the golgi apparatus. The protein localises to the cytoplasmic vesicle. The protein resides in the autophagosome membrane. It localises to the autolysosome membrane. The enzyme catalyses GTP + H2O = GDP + phosphate + H(+). With respect to regulation, regulated by guanine nucleotide exchange factors (GEFs) including C9orf72-SMCR8 complex, which promote the exchange of bound GDP for free GTP. Regulated by GTPase activating proteins (GAPs) which increase the GTP hydrolysis activity. Inhibited by GDP dissociation inhibitors (GDIs). Functionally, the small GTPases Rab are key regulators of intracellular membrane trafficking, from the formation of transport vesicles to their fusion with membranes. Rabs cycle between an inactive GDP-bound form and an active GTP-bound form that is able to recruit to membranes different sets of downstream effectors directly responsible for vesicle formation, movement, tethering and fusion. RAB39B is involved in autophagy and may function in autophagosome formation. Binds downstream effector PICK1 to ensure selectively GRIA2 exit from the endoplasmic reticulum to the Golgi and to regulate AMPAR composition at the post-synapses and thus synaptic transmission. May regulate the homeostasis of SNCA/alpha-synuclein. The chain is Ras-related protein Rab-39B (RAB39B) from Bos taurus (Bovine).